We begin with the raw amino-acid sequence, 2285 residues long: AT-rich interactive domain-containing protein 1A (2285 aa).

Low complexity predominate over residues 1 to 14 (MAAQVAPAAASSLG). Disordered regions lie at residues 1-820 (MAAQ…ALPN) and 978-1005 (ATKMNNKADGTPKTESKSKKSSSSTTTN). Position 2 is an N-acetylalanine (A2). Basic and acidic residues predominate over residues 23–35 (ELKKAEQQQREEA). A phosphoserine mark is found at S58 and S79. Gly residues-rich tracts occupy residues 79 to 95 (SNGGGGGGGAGSGGGPG) and 121 to 130 (PGGGGGGSSD). Low complexity-rich tracts occupy residues 131–142 (GVGAPPHSAAAA), 212–221 (YNSYYPNRSA), and 228–265 (AYALSSPRGGTPGSGAAAAAGSKPPPSSSASASSSSSS). Phosphoserine is present on S233. Residues 273 to 286 (AMGGGGPSAAGGGT) show a composition bias toward gly residues. Residue T286 is modified to Phosphothreonine. Positions 295-299 (LNQLL) match the LXXLL motif. A compositionally biased stretch (polar residues) spans 295 to 306 (LNQLLTSPSSAR). S301 is subject to Phosphoserine. The segment covering 310–327 (GYPGGDYSGGPQDGGAGK) has biased composition (gly residues). Positions 338–353 (GAAAAAAAAAAASGGA) are enriched in low complexity. Phosphoserine occurs at positions 363 and 382. Positions 400–425 (PYSQQQGPPSGPQQGHGYPGQPYGSQ) are enriched in low complexity. The residue at position 429 (R429) is an Asymmetric dimethylarginine. 3 stretches are compositionally biased toward low complexity: residues 447-457 (YTQQIPPYGQQ), 465-546 (QGQT…QHPQ), and 553-595 (QPQA…YSQQ). A Phosphoserine modification is found at S604. Positions 610–621 (SQASSAPSMTSS) are enriched in low complexity. Over residues 628-637 (MNLSLQSRPS) the composition is skewed to polar residues. Over residues 658-674 (SPGVSTSGISSSQGEQS) the composition is skewed to low complexity. A compositionally biased stretch (polar residues) spans 675-685 (NPAQSPFSPHT). Residues S696, S698, S702, S730, S764, and S772 each carry the phosphoserine modification. 2 stretches are compositionally biased toward polar residues: residues 730-747 (SGQSDSIMHPSMNQSSIA) and 755-793 (RNPQMPQYSSPQPGSALSPRQPSGGQIHTGMGSYQQNSM). Residues 797–807 (GPQGGQYGPQG) are compositionally biased toward gly residues. The span at 808 to 820 (GYPRQPNYNALPN) shows a compositional bias: low complexity. Positions 1017–1108 (EPERKMWVDR…CLYAFECKIE (92 aa)) constitute an ARID domain. 2 disordered regions span residues 1113–1483 (PPPD…MMGG) and 1539–1603 (ANHE…SPSK). Low complexity predominate over residues 1141–1154 (MQGPQTPQSTSSSM). The segment covering 1162–1177 (PPTPASTPHSQIPPLP) has biased composition (pro residues). S1184 carries the post-translational modification Phosphoserine. Positions 1194–1219 (GSDSTFQKRNSMTPNPGYQPSMNTSD) are enriched in polar residues. S1235 carries the phosphoserine modification. At R1276 the chain carries Omega-N-methylarginine. Polar residues-rich tracts occupy residues 1299-1315 (NMSTGAPQPNLMPSNPD) and 1339-1356 (YGNQFSTQGTPSGSPFPS). Over residues 1357–1367 (QQTTMYQQQQQ) the composition is skewed to low complexity. Positions 1368–1387 (NYKRPMDGTYGPPAKRHEGE) match the Nuclear localization signal motif. Residues 1396–1425 (GQGQPQQQQLPPAQPQPASQQQAAQPSPQQ) show a composition bias toward low complexity. Residues 1468–1477 (PGTNAQQNMP) are compositionally biased toward polar residues. Residues 1554–1577 (PYGPSAPVPPMTRPPPSNYQPPPS) are compositionally biased toward pro residues. At S1604 the chain carries Phosphoserine. At K1612 the chain carries N6-acetyllysine. The LXXLL signature appears at 1709 to 1713 (LPGLL). 2 disordered regions span residues 1747 to 1774 (PGRFSKVSSPAPMEGGEEEEELLGPKLE) and 1859 to 1907 (FESK…EKRI). Phosphoserine occurs at positions 1751 and 1754. The span at 1761-1774 (GGEEEEELLGPKLE) shows a compositional bias: acidic residues. A compositionally biased stretch (low complexity) spans 1886 to 1895 (EGTPGTTDQE). T1888 carries the phosphothreonine modification. Residue K1905 is modified to N6-acetyllysine. Phosphoserine is present on residues S1929 and S1944. 2 consecutive short sequence motifs (LXXLL) follow at residues 1967 to 1971 (LCTLL) and 2085 to 2089 (LDGLL).

As to quaternary structure, component of SWI/SNF chromatin remodeling complexes, in some of which it can be mutually exclusive with ARID1B/BAF250B. The canonical complex contains a catalytic subunit (either SMARCA4/BRG1/BAF190A or SMARCA2/BRM/BAF190B) and at least SMARCE1, ACTL6A/BAF53, SMARCC1/BAF155, SMARCC2/BAF170, and SMARCB1/SNF5/BAF47. Other subunits specific to each of the complexes may also be present permitting several possible combinations developmentally and tissue specific. Component of the BAF (SWI/SNF-A) complex, which includes at least actin (ACTB), ARID1A/BAF250A, ARID1B/BAF250B, SMARCA2/BRM, SMARCA4/BRG1/BAF190A, ACTL6A/BAF53, ACTL6B/BAF53B, SMARCE1/BAF57, SMARCC1/BAF155, SMARCC2/BAF170, SMARCB1/SNF5/INI1, and one or more SMARCD1/BAF60A, SMARCD2/BAF60B, or SMARCD3/BAF60C. In muscle cells, the BAF complex also contains DPF3. Component of neural progenitors-specific chromatin remodeling complex (npBAF complex) composed of at least, ARID1A/BAF250A or ARID1B/BAF250B, SMARCD1/BAF60A, SMARCD3/BAF60C, SMARCA2/BRM/BAF190B, SMARCA4/BRG1/BAF190A, SMARCB1/BAF47, SMARCC1/BAF155, SMARCE1/BAF57, SMARCC2/BAF170, PHF10/BAF45A, ACTL6A/BAF53A and actin. Component of neuron-specific chromatin remodeling complex (nBAF complex) composed of at least, ARID1A/BAF250A or ARID1B/BAF250B, SMARCD1/BAF60A, SMARCD3/BAF60C, SMARCA2/BRM/BAF190B, SMARCA4/BRG1/BAF190A, SMARCB1/BAF47, SMARCC1/BAF155, SMARCE1/BAF57, SMARCC2/BAF170, DPF1/BAF45B, DPF3/BAF45C, ACTL6B/BAF53B and actin. Component of a SWI/SNF-like EBAFa complex, at least composed of SMARCA4/BRG1/BAF190A, SMARCB1/BAF47/SNF5, ACTL6A/BAF53A, SMARCE1/BAF57, SMARCD1/BAF60A, SMARCC1/BAF155, SMARCC2/BAF170, BAF250A and MLLT1/ENL. Interacts through its C-terminus with SMARCA2/BRM/BAF190B and SMARCA4/BRG1/BAF190A. Interacts with SMARCC1/BAF155. Interacts with FOS, FOSB isoform 1 and 2, FOSL1 and FOSL2. In terms of tissue distribution, highly expressed in spleen, thymus, prostate, testis, ovary, small intestine, colon, and PBL, and at a much lower level in heart, brain, placenta, lung, liver, skeletal muscle, kidney, and pancreas.

It is found in the nucleus. Functionally, involved in transcriptional activation and repression of select genes by chromatin remodeling (alteration of DNA-nucleosome topology). Component of SWI/SNF chromatin remodeling complexes that carry out key enzymatic activities, changing chromatin structure by altering DNA-histone contacts within a nucleosome in an ATP-dependent manner. Binds DNA non-specifically. Belongs to the neural progenitors-specific chromatin remodeling complex (npBAF complex) and the neuron-specific chromatin remodeling complex (nBAF complex). During neural development a switch from a stem/progenitor to a postmitotic chromatin remodeling mechanism occurs as neurons exit the cell cycle and become committed to their adult state. The transition from proliferating neural stem/progenitor cells to postmitotic neurons requires a switch in subunit composition of the npBAF and nBAF complexes. As neural progenitors exit mitosis and differentiate into neurons, npBAF complexes which contain ACTL6A/BAF53A and PHF10/BAF45A, are exchanged for homologous alternative ACTL6B/BAF53B and DPF1/BAF45B or DPF3/BAF45C subunits in neuron-specific complexes (nBAF). The npBAF complex is essential for the self-renewal/proliferative capacity of the multipotent neural stem cells. The nBAF complex along with CREST plays a role regulating the activity of genes essential for dendrite growth. The polypeptide is AT-rich interactive domain-containing protein 1A (ARID1A) (Homo sapiens (Human)).